A 496-amino-acid chain; its full sequence is Glycerol kinase (496 aa).

Position 12 (Thr-12) interacts with ADP. Residues Thr-12, Thr-13, and Ser-14 each coordinate ATP. Thr-12 contacts sn-glycerol 3-phosphate. Residue Arg-16 participates in ADP binding. Residues Arg-82, Glu-83, Tyr-134, and Asp-244 each contribute to the sn-glycerol 3-phosphate site. Arg-82, Glu-83, Tyr-134, Asp-244, and Gln-245 together coordinate glycerol. 2 residues coordinate ADP: Thr-266 and Gly-309. Residues Thr-266, Gly-309, Gln-313, and Gly-410 each coordinate ATP. ADP contacts are provided by Gly-410 and Asn-414.

It belongs to the FGGY kinase family.

It carries out the reaction glycerol + ATP = sn-glycerol 3-phosphate + ADP + H(+). It functions in the pathway polyol metabolism; glycerol degradation via glycerol kinase pathway; sn-glycerol 3-phosphate from glycerol: step 1/1. Its activity is regulated as follows. Inhibited by fructose 1,6-bisphosphate (FBP). Key enzyme in the regulation of glycerol uptake and metabolism. Catalyzes the phosphorylation of glycerol to yield sn-glycerol 3-phosphate. This chain is Glycerol kinase, found in Treponema denticola (strain ATCC 35405 / DSM 14222 / CIP 103919 / JCM 8153 / KCTC 15104).